The sequence spans 370 residues: MEATKQVVNFGPGPAKLPHSVLLEIQKQLLDYRGLGISVLEMSHRSSDFAKIIGNTENLVRELLAVPNNYKVIFVQGGGSGQFSAVPLNLIGLKAGRSADYVVTGAWSAKAAEEAKKFGTVNIVHPKLGSYTKIPDPSTWNLNPDASYVYFCANETVHGVEFDFVPDVKGAVLVCDMSSNFLSRPVDVSKFGVIFAGAQKNVGSAGVTVVIVRDDLLGFSLRECPSVLDYKVQAGNNSLYNTPPCFSIYVMGMVLEWIKNNGGAAAMEKLSSIKSQMIYEIIDNSQGFYVCPVERQNRSRMNIPFRIGNAKGDEALEKRFLDKAVELNMISLKGHRSVGGIRASLYNAVTTEDVEKLAAFMKNFLEMHQL.

M1 is subject to N-acetylmethionine. O-phospho-L-serine contacts are provided by H44 and R45. K51 bears the N6-acetyllysine mark. Pyridoxal 5'-phosphate contacts are provided by G79 and W107. Position 127 is an N6-acetyllysine (K127). The pyridoxal 5'-phosphate site is built by T156, D176, and Q199. K200 bears the N6-(pyridoxal phosphate)lysine mark. 2 residues coordinate pyridoxal 5'-phosphate: N241 and T242. 3 positions are modified to N6-acetyllysine: K269, K318, and K323. At S331 the chain carries Phosphoserine. K333 is modified (N6-acetyllysine). O-phospho-L-serine contacts are provided by H335, R336, and R342.

It belongs to the class-V pyridoxal-phosphate-dependent aminotransferase family. SerC subfamily. As to quaternary structure, homodimer. The cofactor is pyridoxal 5'-phosphate.

It catalyses the reaction O-phospho-L-serine + 2-oxoglutarate = 3-phosphooxypyruvate + L-glutamate. It participates in amino-acid biosynthesis; L-serine biosynthesis; L-serine from 3-phospho-D-glycerate: step 2/3. In terms of biological role, involved in L-serine biosynthesis via the phosphorylated pathway, a three-step pathway converting the glycolytic intermediate 3-phospho-D-glycerate into L-serine. Catalyzes the second step, that is the pyridoxal 5'-phosphate-dependent transamination of 3-phosphohydroxypyruvate and L-glutamate to O-phosphoserine (OPS) and alpha-ketoglutarate. The sequence is that of Phosphoserine aminotransferase from Mus musculus (Mouse).